Consider the following 130-residue polypeptide: Translation initiation factor 5A (130 aa).

At lysine 36 the chain carries Hypusine.

It belongs to the eIF-5A family.

It is found in the cytoplasm. Functions by promoting the formation of the first peptide bond. This chain is Translation initiation factor 5A (eif5a), found in Methanothermobacter thermautotrophicus (strain ATCC 29096 / DSM 1053 / JCM 10044 / NBRC 100330 / Delta H) (Methanobacterium thermoautotrophicum).